The sequence spans 124 residues: Putative peptidyl-tRNA hydrolase (124 aa).

Belongs to the PTH2 family.

It carries out the reaction an N-acyl-L-alpha-aminoacyl-tRNA + H2O = an N-acyl-L-amino acid + a tRNA + H(+). The chain is Putative peptidyl-tRNA hydrolase from Fowlpox virus (strain NVSL) (FPV).